A 304-amino-acid polypeptide reads, in one-letter code: Protoheme IX farnesyltransferase (304 aa).

Transmembrane regions (helical) follow at residues 32 to 52 (VVAL…PGSV), 54 to 74 (LQPL…AAAF), 104 to 124 (ALTF…TLVN), 126 to 146 (LTAW…TAYL), 154 to 174 (IVVG…SVTG), 180 to 200 (ALLL…ALAI), 226 to 246 (CILL…LVGM), 247 to 267 (CGPV…YKAW), and 284 to 304 (FSIY…YLWV).

It belongs to the UbiA prenyltransferase family. Protoheme IX farnesyltransferase subfamily.

It is found in the cell inner membrane. The enzyme catalyses heme b + (2E,6E)-farnesyl diphosphate + H2O = Fe(II)-heme o + diphosphate. Its pathway is porphyrin-containing compound metabolism; heme O biosynthesis; heme O from protoheme: step 1/1. Its function is as follows. Converts heme B (protoheme IX) to heme O by substitution of the vinyl group on carbon 2 of heme B porphyrin ring with a hydroxyethyl farnesyl side group. This chain is Protoheme IX farnesyltransferase, found in Shewanella sediminis (strain HAW-EB3).